The chain runs to 306 residues: Probable protein ABIL1 (306 aa).

The tract at residues 200-236 is disordered; the sequence is KNSKTNGARQSEFVLEETKATKPASRGKEPSTSPLPK.

The protein belongs to the ABI family. Binds SCAR.

The protein localises to the cytoplasm. Its subcellular location is the cytoskeleton. Its function is as follows. Involved in regulation of actin and microtubule organization. Part of a WAVE complex that activates the Arp2/3 complex. The protein is Probable protein ABIL1 of Oryza sativa subsp. japonica (Rice).